The sequence spans 195 residues: Protein GrpE (195 aa).

It belongs to the GrpE family. In terms of assembly, homodimer.

The protein resides in the cytoplasm. Participates actively in the response to hyperosmotic and heat shock by preventing the aggregation of stress-denatured proteins, in association with DnaK and GrpE. It is the nucleotide exchange factor for DnaK and may function as a thermosensor. Unfolded proteins bind initially to DnaJ; upon interaction with the DnaJ-bound protein, DnaK hydrolyzes its bound ATP, resulting in the formation of a stable complex. GrpE releases ADP from DnaK; ATP binding to DnaK triggers the release of the substrate protein, thus completing the reaction cycle. Several rounds of ATP-dependent interactions between DnaJ, DnaK and GrpE are required for fully efficient folding. This Francisella tularensis subsp. novicida (strain U112) protein is Protein GrpE.